A 536-amino-acid chain; its full sequence is MQKHWWHKATVYQIYPKSFMDTNGDGIGDLKGITSKLDYLQKLGVMAIWLSPVYDSPMDDNGYDIANYEAITDIFGNMADMDNLLTQAKMRGIKIIMDLVVNHTSDEHAWFIEAREHPDSSERDYYIWCDQPNDLESIFGGSAWQYDDKSDQYYLHFFSKKQPDLNWENANLRQKIYDMMNFWIDKGIGGFRMDVIDMIGKIPAQHIVSNGPKLHAYLKEMNAASFGQHDLLTVGETWGATPEIAKQYSNPVNHELSMVFQFEHIGLQHKPEAPKWDYVKELNVPALKTIFNKWQTELELGQGWNSLFWNNHDLPRVLSIWGNTGKYREKSAKALAILLHLMRGTPYIYQGEEIGMTNYPFKDLNELDDIESLNYAKEAFTNGKSMETIMDSIRMIGRDNARTPMQWDASQNAGFSTADKTWLPVNPNYKDINVQAALKNSNSIFYTYQQLIQLRKENDWLVDADFELLPTADKVFAYLRKVREERYLIVVNVSDQEEVLEIDVDKQETLISNTNESAALANHKLQPWDAFCIKIN.

The active-site Nucleophile is the D194. E236 acts as the Proton donor in catalysis.

Belongs to the glycosyl hydrolase 13 family.

Its subcellular location is the cytoplasm. It carries out the reaction Hydrolysis of (1-&gt;6)-alpha-D-glucosidic linkages in (1-&gt;6)-alpha-D-glucans and derived oligosaccharides.. The physiological substrates may be short isomaltosaccharides. This chain is Glucan 1,6-alpha-glucosidase (dexB), found in Streptococcus mutans serotype c (strain ATCC 700610 / UA159).